A 428-amino-acid polypeptide reads, in one-letter code: tRNA modification GTPase MnmE (428 aa).

Residues arginine 20, glutamate 77, and lysine 117 each contribute to the (6S)-5-formyl-5,6,7,8-tetrahydrofolate site. The 139-residue stretch at 213-351 (GFEVAIIGPP…LVQRISDVLK (139 aa)) folds into the TrmE-type G domain. Asparagine 223 is a binding site for K(+). GTP contacts are provided by residues 223–228 (NAGKST), 242–248 (SEVAGTT), and 267–270 (DTAG). A Mg(2+)-binding site is contributed by serine 227. The K(+) site is built by serine 242, valine 244, and threonine 247. Threonine 248 is a binding site for Mg(2+). Residue lysine 428 coordinates (6S)-5-formyl-5,6,7,8-tetrahydrofolate.

Belongs to the TRAFAC class TrmE-Era-EngA-EngB-Septin-like GTPase superfamily. TrmE GTPase family. Homodimer. Heterotetramer of two MnmE and two MnmG subunits. The cofactor is K(+).

Its subcellular location is the cytoplasm. In terms of biological role, exhibits a very high intrinsic GTPase hydrolysis rate. Involved in the addition of a carboxymethylaminomethyl (cmnm) group at the wobble position (U34) of certain tRNAs, forming tRNA-cmnm(5)s(2)U34. This chain is tRNA modification GTPase MnmE, found in Ruegeria pomeroyi (strain ATCC 700808 / DSM 15171 / DSS-3) (Silicibacter pomeroyi).